A 138-amino-acid chain; its full sequence is Small ribosomal subunit protein uS11c (138 aa).

The segment at 1 to 22 (MAKSIPRISSRRNGPIGSGKTV) is disordered.

It belongs to the universal ribosomal protein uS11 family. In terms of assembly, part of the 30S ribosomal subunit.

Its subcellular location is the plastid. This chain is Small ribosomal subunit protein uS11c, found in Cuscuta exaltata (Tall dodder).